A 571-amino-acid chain; its full sequence is Proline--tRNA ligase (571 aa).

It belongs to the class-II aminoacyl-tRNA synthetase family. ProS type 1 subfamily. In terms of assembly, homodimer.

Its subcellular location is the cytoplasm. The catalysed reaction is tRNA(Pro) + L-proline + ATP = L-prolyl-tRNA(Pro) + AMP + diphosphate. In terms of biological role, catalyzes the attachment of proline to tRNA(Pro) in a two-step reaction: proline is first activated by ATP to form Pro-AMP and then transferred to the acceptor end of tRNA(Pro). As ProRS can inadvertently accommodate and process non-cognate amino acids such as alanine and cysteine, to avoid such errors it has two additional distinct editing activities against alanine. One activity is designated as 'pretransfer' editing and involves the tRNA(Pro)-independent hydrolysis of activated Ala-AMP. The other activity is designated 'posttransfer' editing and involves deacylation of mischarged Ala-tRNA(Pro). The misacylated Cys-tRNA(Pro) is not edited by ProRS. The sequence is that of Proline--tRNA ligase from Vibrio vulnificus (strain CMCP6).